Here is an 836-residue protein sequence, read N- to C-terminus: Protein AKNAD1 (836 aa).

Polar residues-rich tracts occupy residues 159–172, 181–192, and 227–248; these read SWPKEQTPELTDQL, SNKPGSATTTEE, and SYQGQSPQKQQTEKANSGNTFK. Disordered regions lie at residues 159-248 and 303-325; these read SWPK…NTFK and LETTPESNCVEKQHQEQKGKITE. A compositionally biased stretch (basic and acidic residues) spans 311–323; that stretch reads CVEKQHQEQKGKI. Positions 372-484 form a coiled coil; that stretch reads QKISQGKQMC…DVKEKMDESK (113 aa). Disordered stretches follow at residues 510–545 and 575–596; these read SNEIPKEHPGHPSGPRGSGGSEVTGTPQGGPQEAPN and MRLSSNSGEDPNGTPRRQDCAE.

The protein belongs to the AKNA family.

In Homo sapiens (Human), this protein is Protein AKNAD1 (AKNAD1).